The following is a 362-amino-acid chain: 3-dehydroquinate synthase (362 aa).

Residues 70–75 (DGEKYK), 104–108 (GVIGD), 128–129 (TT), Lys141, Lys150, and 168–171 (TLNT) each bind NAD(+). 3 residues coordinate Zn(2+): Glu183, His246, and His263.

This sequence belongs to the sugar phosphate cyclases superfamily. Dehydroquinate synthase family. The cofactor is Co(2+). Requires Zn(2+) as cofactor. NAD(+) serves as cofactor.

The protein resides in the cytoplasm. The enzyme catalyses 7-phospho-2-dehydro-3-deoxy-D-arabino-heptonate = 3-dehydroquinate + phosphate. The protein operates within metabolic intermediate biosynthesis; chorismate biosynthesis; chorismate from D-erythrose 4-phosphate and phosphoenolpyruvate: step 2/7. Its function is as follows. Catalyzes the conversion of 3-deoxy-D-arabino-heptulosonate 7-phosphate (DAHP) to dehydroquinate (DHQ). The polypeptide is 3-dehydroquinate synthase (Haemophilus influenzae (strain 86-028NP)).